Here is a 449-residue protein sequence, read N- to C-terminus: Tubulin alpha-1C chain (449 aa).

Residues methionine 1–cysteine 4 carry the MREC motif motif. Glutamine 11 lines the GTP pocket. The residue at position 40 (lysine 40) is an N6-acetyllysine. Glutamate 71, serine 140, glycine 144, threonine 145, threonine 179, asparagine 206, and asparagine 228 together coordinate GTP. Residue glutamate 71 coordinates Mg(2+). Residue glutamate 254 is part of the active site. The residue at position 282 (tyrosine 282) is a 3'-nitrotyrosine. Phosphotyrosine is present on tyrosine 432. The residue at position 439 (serine 439) is a Phosphoserine. Tyrosine 449 carries the 3'-nitrotyrosine modification.

The protein belongs to the tubulin family. Dimer of alpha and beta chains. A typical microtubule is a hollow water-filled tube with an outer diameter of 25 nm and an inner diameter of 15 nM. Alpha-beta heterodimers associate head-to-tail to form protofilaments running lengthwise along the microtubule wall with the beta-tubulin subunit facing the microtubule plus end conferring a structural polarity. Microtubules usually have 13 protofilaments but different protofilament numbers can be found in some organisms and specialized cells. The cofactor is Mg(2+). Some glutamate residues at the C-terminus are polyglycylated, resulting in polyglycine chains on the gamma-carboxyl group. Glycylation is mainly limited to tubulin incorporated into axonemes (cilia and flagella) whereas glutamylation is prevalent in neuronal cells, centrioles, axonemes, and the mitotic spindle. Both modifications can coexist on the same protein on adjacent residues, and lowering polyglycylation levels increases polyglutamylation, and reciprocally. Cilia and flagella glycylation is required for their stability and maintenance. Flagella glycylation controls sperm motility. Post-translationally, some glutamate residues at the C-terminus are polyglutamylated, resulting in polyglutamate chains on the gamma-carboxyl group. Polyglutamylation plays a key role in microtubule severing by spastin (SPAST). SPAST preferentially recognizes and acts on microtubules decorated with short polyglutamate tails: severing activity by SPAST increases as the number of glutamates per tubulin rises from one to eight, but decreases beyond this glutamylation threshold. Glutamylation is also involved in cilia motility. In terms of processing, acetylation of alpha chains at Lys-40 is located inside the microtubule lumen. This modification has been correlated with increased microtubule stability, intracellular transport and ciliary assembly. Methylation of alpha chains at Lys-40 is found in mitotic microtubules and is required for normal mitosis and cytokinesis contributing to genomic stability. Post-translationally, nitration of Tyr-449 is irreversible and interferes with normal dynein intracellular distribution. In terms of processing, undergoes a tyrosination/detyrosination cycle, the cyclic removal and re-addition of a C-terminal tyrosine residue by the enzymes tubulin tyrosine carboxypeptidase (MATCAP1, VASH1 or VASH2) and tubulin tyrosine ligase (TTL), respectively. Tyrosination promotes microtubule interaction with CAP-Gly domain-containing proteins such as CLIP1, CLIP2 and DCTN1. Tyrosination regulates the initiation of dynein-dynactin motility via interaction with DCTN1, which brings the dynein-dynactin complex into contact with microtubules. In neurons, tyrosinated tubulins mediate the initiation of retrograde vesicle transport. Post-translationally, detyrosination is involved in metaphase plate congression by guiding chromosomes during mitosis: detyrosination promotes interaction with CENPE, promoting pole-proximal transport of chromosomes toward the equator. Detyrosination increases microtubules-dependent mechanotransduction in dystrophic cardiac and skeletal muscle. In cardiomyocytes, detyrosinated microtubules are required to resist to contractile compression during contraction: detyrosination promotes association with desmin (DES) at force-generating sarcomeres, leading to buckled microtubules and mechanical resistance to contraction. In terms of tissue distribution, minor alpha-tubulin expressed in all tissues.

The protein localises to the cytoplasm. The protein resides in the cytoskeleton. It carries out the reaction GTP + H2O = GDP + phosphate + H(+). Functionally, tubulin is the major constituent of microtubules, a cylinder consisting of laterally associated linear protofilaments composed of alpha- and beta-tubulin heterodimers. Microtubules grow by the addition of GTP-tubulin dimers to the microtubule end, where a stabilizing cap forms. Below the cap, tubulin dimers are in GDP-bound state, owing to GTPase activity of alpha-tubulin. This is Tubulin alpha-1C chain (Tuba1c) from Mus musculus (Mouse).